A 197-amino-acid polypeptide reads, in one-letter code: Ribosome maturation factor RimM (197 aa).

In terms of domain architecture, PRC barrel spans Glu-99–Leu-174.

Belongs to the RimM family. Binds ribosomal protein uS19.

Its subcellular location is the cytoplasm. Its function is as follows. An accessory protein needed during the final step in the assembly of 30S ribosomal subunit, possibly for assembly of the head region. Essential for efficient processing of 16S rRNA. May be needed both before and after RbfA during the maturation of 16S rRNA. It has affinity for free ribosomal 30S subunits but not for 70S ribosomes. In Bartonella quintana (strain Toulouse) (Rochalimaea quintana), this protein is Ribosome maturation factor RimM.